Consider the following 347-residue polypeptide: S-adenosylmethionine decarboxylase proenzyme (347 aa).

Residues E10 and E13 contribute to the active site. The active-site Schiff-base intermediate with substrate; via pyruvic acid is the S66. Pyruvic acid (Ser); by autocatalysis is present on S66. Residue C80 is the Proton donor; for catalytic activity of the active site. Residues S237 and H251 each act as proton acceptor; for processing activity in the active site.

Belongs to the eukaryotic AdoMetDC family. Pyruvate serves as cofactor. In terms of processing, is synthesized initially as an inactive proenzyme. Formation of the active enzyme involves a self-maturation process in which the active site pyruvoyl group is generated from an internal serine residue via an autocatalytic post-translational modification. Two non-identical subunits are generated from the proenzyme in this reaction, and the pyruvate is formed at the N-terminus of the alpha chain, which is derived from the carboxyl end of the proenzyme. The post-translation cleavage follows an unusual pathway, termed non-hydrolytic serinolysis, in which the side chain hydroxyl group of the serine supplies its oxygen atom to form the C-terminus of the beta chain, while the remainder of the serine residue undergoes an oxidative deamination to produce ammonia and the pyruvoyl group blocking the N-terminus of the alpha chain.

It catalyses the reaction S-adenosyl-L-methionine + H(+) = S-adenosyl 3-(methylsulfanyl)propylamine + CO2. Its pathway is amine and polyamine biosynthesis; S-adenosylmethioninamine biosynthesis; S-adenosylmethioninamine from S-adenosyl-L-methionine: step 1/1. In Drosophila melanogaster (Fruit fly), this protein is S-adenosylmethionine decarboxylase proenzyme (SamDC).